The primary structure comprises 379 residues: UPF0450 protein C17orf58 homolog (379 aa).

The N-terminal stretch at 1-17 is a signal peptide; it reads MIPALTVPLLFLCATSA. 2 disordered regions span residues 76–95 and 162–194; these read RTRA…PDKT and TASQ…MNPH. The segment covering 180-194 has biased composition (basic and acidic residues); the sequence is SMDHESNRPGKMNPH. 3 disulfides stabilise this stretch: Cys234–Cys308, Cys238–Cys312, and Cys249–Cys378. Residues 234–378 enclose the NTR domain; the sequence is CIAECHRDKD…KVLAAAHSKC (145 aa).

This sequence belongs to the UPF0450 family.

The protein is UPF0450 protein C17orf58 homolog of Xenopus laevis (African clawed frog).